Consider the following 345-residue polypeptide: Uroporphyrinogen decarboxylase (345 aa).

Substrate is bound by residues 27-31 (RQAGR), phenylalanine 46, aspartate 76, tyrosine 152, serine 207, and histidine 321.

Belongs to the uroporphyrinogen decarboxylase family. In terms of assembly, homodimer.

The protein resides in the cytoplasm. The enzyme catalyses uroporphyrinogen III + 4 H(+) = coproporphyrinogen III + 4 CO2. It functions in the pathway porphyrin-containing compound metabolism; protoporphyrin-IX biosynthesis; coproporphyrinogen-III from 5-aminolevulinate: step 4/4. Its function is as follows. Catalyzes the decarboxylation of four acetate groups of uroporphyrinogen-III to yield coproporphyrinogen-III. The polypeptide is Uroporphyrinogen decarboxylase (Staphylococcus aureus (strain bovine RF122 / ET3-1)).